Reading from the N-terminus, the 165-residue chain is Fibrinogen-binding protein (165 aa).

Residues 1-29 (MKNKLIAKSLLAIAAIGITTTTIASTADA) form the signal peptide.

Interacts with host fibrinogen alpha chain/FGA. Interacts with host complement protein C3.

It localises to the secreted. Functionally, extracellular fibrinogen-binding protein that plays an important role in virulence. By interacting with the alpha chain of fibrinogen and its derivative fibrin, enhances a non-functional interaction between fibrinogen and platelets and is responsible for repression of fibrinogen-dependent platelet aggregation. In addition, assembles a fibrinogen protective shield around the bacteria which results in impaired phagocytic clearance by the host. Mechanistically, interacts with host complement C3b deposited on the surface of the bacterium via its C-terminal and then recruits fibrinogen via its N-terminal. The protein is Fibrinogen-binding protein (fib) of Staphylococcus aureus (strain MRSA252).